A 157-amino-acid chain; its full sequence is uncharacterized protein (157 aa).

The N-acetyltransferase domain occupies 9-147; it reads LLINYKTLDE…DFYVWHPEVN (139 aa).

This is an uncharacterized protein from Bacillus cereus (strain 03BB102).